The following is a 229-amino-acid chain: 2-C-methyl-D-erythritol 4-phosphate cytidylyltransferase (229 aa).

The protein belongs to the IspD/TarI cytidylyltransferase family. IspD subfamily. Homodimer.

The catalysed reaction is 2-C-methyl-D-erythritol 4-phosphate + CTP + H(+) = 4-CDP-2-C-methyl-D-erythritol + diphosphate. The protein operates within isoprenoid biosynthesis; isopentenyl diphosphate biosynthesis via DXP pathway; isopentenyl diphosphate from 1-deoxy-D-xylulose 5-phosphate: step 2/6. Its function is as follows. Catalyzes the formation of 4-diphosphocytidyl-2-C-methyl-D-erythritol from CTP and 2-C-methyl-D-erythritol 4-phosphate (MEP). This is 2-C-methyl-D-erythritol 4-phosphate cytidylyltransferase from Wigglesworthia glossinidia brevipalpis.